The primary structure comprises 412 residues: Subtilisin-like protease 6 (412 aa).

The N-terminal stretch at 1-20 (MGFITKAIPIVLAALSTVNG) is a signal peptide. Residues 21 to 127 (ARILEAGPHA…VRATTNGTNL (107 aa)) constitute a propeptide that is removed on maturation. One can recognise an Inhibitor I9 domain in the interval 36–120 (KYIVVMKKDV…FIEPDFVVRA (85 aa)). 2 N-linked (GlcNAc...) asparagine glycosylation sites follow: asparagine 123 and asparagine 126. In terms of domain architecture, Peptidase S8 spans 135–412 (SWGLARVSTR…SKLIYNGSGK (278 aa)). Residues aspartate 167 and histidine 198 each act as charge relay system in the active site. Asparagine 252, asparagine 264, and asparagine 325 each carry an N-linked (GlcNAc...) asparagine glycan. The active-site Charge relay system is the serine 358. Asparagine 408 is a glycosylation site (N-linked (GlcNAc...) asparagine).

Belongs to the peptidase S8 family.

It is found in the secreted. Secreted subtilisin-like serine protease with keratinolytic activity that contributes to pathogenicity. The polypeptide is Subtilisin-like protease 6 (SUB6) (Trichophyton verrucosum (Cattle ringworm fungus)).